The sequence spans 471 residues: UDP-glycosyltransferase 71A15 (471 aa).

Residues S282, 348 to 349 (WA), 366 to 374 (HCGWNSTLE), and 388 to 391 (YAEQ) contribute to the UDP-alpha-D-glucose site.

It belongs to the UDP-glycosyltransferase family.

Its function is as follows. Glycosyltransferase that possesses chalcone and flavonol 2'-O-glycosyltransferase activity. Converts phloretin to phlorizin (phloretin 2'-O-glucoside), a potent antioxidant. Possesses glycosyltransferase activity toward, naringenin, naringenin chalcone, eriodictyol, eriodictyol chalcone, apigenin, luteolin, kaempferol, quercetin, isoliquiritigenin, butein and caffeic acid. Can convert phloretin to phloretin 4'-O-glucoside and phloretin 4-O-glucoside. In Malus domestica (Apple), this protein is UDP-glycosyltransferase 71A15.